The sequence spans 922 residues: Protein translocase subunit SecA (922 aa).

Residues glutamine 87, 105 to 109, and aspartate 519 contribute to the ATP site; that span reads GEGKT. The segment at 850 to 891 is disordered; it reads HASRQMRSIQGNAQHNSMGSFSGSGHGMGPTALSARSRPENA. The span at 854–865 shows a compositional bias: polar residues; sequence QMRSIQGNAQHN. The Zn(2+) site is built by cysteine 906, cysteine 908, cysteine 917, and cysteine 918.

The protein belongs to the SecA family. Monomer and homodimer. Part of the essential Sec protein translocation apparatus which comprises SecA, SecYEG and auxiliary proteins SecDF. Other proteins may also be involved. Zn(2+) is required as a cofactor.

It localises to the cell inner membrane. The protein resides in the cytoplasm. It carries out the reaction ATP + H2O + cellular proteinSide 1 = ADP + phosphate + cellular proteinSide 2.. Part of the Sec protein translocase complex. Interacts with the SecYEG preprotein conducting channel. Has a central role in coupling the hydrolysis of ATP to the transfer of proteins into and across the cell membrane, serving as an ATP-driven molecular motor driving the stepwise translocation of polypeptide chains across the membrane. This chain is Protein translocase subunit SecA, found in Treponema denticola (strain ATCC 35405 / DSM 14222 / CIP 103919 / JCM 8153 / KCTC 15104).